The primary structure comprises 429 residues: Endo-beta-1,4-galactanase (429 aa).

The signal sequence occupies residues 1-21 (MKSKVKMFFAAAIVWSACSST). 146–149 (DPAK) is a binding site for substrate. The active-site Proton donor is the E194. Residues 233–234 (TN) and H267 contribute to the substrate site. Residue E292 is the Nucleophile of the active site. Residue T296 participates in substrate binding. Ca(2+) is bound by residues D301, D303, H305, and N307. 2 residues coordinate substrate: K311 and D388. Ca(2+)-binding residues include S396 and D399.

It belongs to the glycosyl hydrolase 53 family. Requires Ca(2+) as cofactor.

The protein localises to the secreted. The enzyme catalyses The enzyme specifically hydrolyzes (1-&gt;4)-beta-D-galactosidic linkages in type I arabinogalactans.. Its function is as follows. Involved in galactan degradation. Degrades arabinose-free galactan to galactooligosaccharides, producing galactotetraose as the main product along with galactotriose, galactobiose, and galactose. Is also able to degrade galactotetraose, galactotriose and galactobiose, suggesting an additional exo-mode of activity. May hydrolyze the beta-1,4-galactan linkages of the galactan portion of arabinogalactan type I, a pectic plant polysaccharide from which most of the arabinose has been removed. The polypeptide is Endo-beta-1,4-galactanase (Bacillus subtilis (strain 168)).